The chain runs to 332 residues: Probable ABC transporter permease protein YphD (332 aa).

The next 10 membrane-spanning stretches (helical) occupy residues G28 to I48, I63 to V83, G84 to L104, A105 to L125, V131 to M151, F172 to I192, V222 to A242, G251 to L271, L278 to L298, and F303 to L323.

Belongs to the binding-protein-dependent transport system permease family. AraH/RbsC subfamily.

The protein resides in the cell inner membrane. Probably part of the binding-protein-dependent transport system YphDEF. Probably responsible for the translocation of the substrate across the membrane. The protein is Probable ABC transporter permease protein YphD (yphD) of Escherichia coli (strain K12).